An 861-amino-acid chain; its full sequence is Semaphorin-4D (861 aa).

The N-terminal stretch at 1–23 (MRMCAPVRGLFLALVVVLRTAVA) is a signal peptide. In terms of domain architecture, Sema spans 24-500 (FAPVPRLTWE…SNSGVVQAPL (477 aa)). Over 24–733 (FAPVPRLTWE…TVYLKSSDNR (710 aa)) the chain is Extracellular. 2 N-linked (GlcNAc...) asparagine glycosylation sites follow: N49 and N77. 2 cysteine pairs are disulfide-bonded: C97–C108 and C126–C135. 2 N-linked (GlcNAc...) asparagine glycosylation sites follow: N139 and N191. Cystine bridges form between C257/C370 and C281/C326. N-linked (GlcNAc...) asparagine glycosylation is found at N379 and N419. Residues 502–551 (FCEKHGSCEDCVLARDPYCAWSPAIKACVTLHQEEASSRGWIQDMSGDTS) form the PSI domain. 4 disulfides stabilise this stretch: C503/C520, C509/C553, C512/C529, and C576/C624. The Ig-like C2-type domain maps to 555–636 (DKSKESFNQH…EERVRNKTVS (82 aa)). N613 and N632 each carry an N-linked (GlcNAc...) asparagine glycan. The tract at residues 649–709 (VPRTPPSPTS…KSSSGTSCEP (61 aa)) is disordered. Residues 657–681 (TSEDAQTEGSKITSKMPVASTQGSS) are compositionally biased toward polar residues. A helical transmembrane segment spans residues 734–754 (LLMSLLLFIFVLFLCLFSYNC). The Cytoplasmic segment spans residues 755–861 (YKGYLPGQCL…KFADSDADGD (107 aa)). A phosphoserine mark is found at S782 and S832. Positions 793–839 (VEPGSFSQQNGDHPKPALDTGYETEQDTITSKVPTDREDSQRIDELS) are disordered. Residues 826–839 (PTDREDSQRIDELS) are compositionally biased toward basic and acidic residues.

Belongs to the semaphorin family. As to quaternary structure, homodimer. Interacts with PLXNB1. Interacts with PLXNB2. In terms of tissue distribution, strongly expressed in lymphoid tissues, especially in the thymus, as well as in the nervous tissues. Expressed in neurons and glia in the developing hippocampus.

Its subcellular location is the cell membrane. Its function is as follows. Cell surface receptor for PLXNB1 and PLXNB2 that plays an important role in cell-cell signaling. Regulates GABAergic synapse development. Promotes the development of inhibitory synapses in a PLXNB1-dependent manner. Modulates the complexity and arborization of developing neurites in hippocampal neurons by activating PLXNB1 and interaction with PLXNB1 mediates activation of RHOA. Promotes the migration of cerebellar granule cells. Plays a role in the immune system; induces B-cells to aggregate and improves their viability (in vitro). Induces endothelial cell migration through the activation of PTK2B/PYK2, SRC, and the phosphatidylinositol 3-kinase-AKT pathway. The sequence is that of Semaphorin-4D (Sema4d) from Mus musculus (Mouse).